The sequence spans 457 residues: Sensor protein CpxA (457 aa).

Topologically, residues 1–7 are cytoplasmic; sequence MIGSLTA. Residues 8–29 form a helical membrane-spanning segment; that stretch reads RIFAIFWLTLALVLMLVLMLPK. The Periplasmic segment spans residues 30–163; the sequence is LDSRQMTELL…SDFINLLFDR (134 aa). A helical membrane pass occupies residues 164–184; it reads PLLLLIVTMLVSTPLLLWLAW. In terms of domain architecture, HAMP spans 185 to 237; it reads SLAKPARKLKNAADEVAQGNLRQHPELEAGPQEFLAAGASFNQMVTALERMMT. The Cytoplasmic segment spans residues 185-457; the sequence is SLAKPARKLK…VIWLPLYKRS (273 aa). A Histidine kinase domain is found at 245 to 455; that stretch reads DISHELRTPL…RLVIWLPLYK (211 aa). A Phosphohistidine; by autocatalysis modification is found at His-248.

It localises to the cell inner membrane. The enzyme catalyses ATP + protein L-histidine = ADP + protein N-phospho-L-histidine.. Its function is as follows. This protein is involved in several diverse cellular processes, such as the functioning of acetohydroxyacid synthetase I, in the biosynthesis of isoleucine and valine, the TraJ protein activation activity for tra gene expression in F plasmid, and the synthesis, translocation, or stability of cell envelope proteins. Activates CpxR by phosphorylation. The polypeptide is Sensor protein CpxA (cpxA) (Escherichia coli O157:H7).